Here is a 251-residue protein sequence, read N- to C-terminus: Aspartate/glutamate leucyltransferase (251 aa).

The protein belongs to the R-transferase family. Bpt subfamily.

It is found in the cytoplasm. The enzyme catalyses N-terminal L-glutamyl-[protein] + L-leucyl-tRNA(Leu) = N-terminal L-leucyl-L-glutamyl-[protein] + tRNA(Leu) + H(+). It catalyses the reaction N-terminal L-aspartyl-[protein] + L-leucyl-tRNA(Leu) = N-terminal L-leucyl-L-aspartyl-[protein] + tRNA(Leu) + H(+). Functions in the N-end rule pathway of protein degradation where it conjugates Leu from its aminoacyl-tRNA to the N-termini of proteins containing an N-terminal aspartate or glutamate. The polypeptide is Aspartate/glutamate leucyltransferase (Xanthomonas oryzae pv. oryzae (strain KACC10331 / KXO85)).